A 209-amino-acid chain; its full sequence is Virulence factors putative positive transcription regulator BvgA (209 aa).

The Response regulatory domain maps to 4 to 119 (KVLIIDDHPV…EVINAAKAVM (116 aa)). 4-aspartylphosphate is present on D54. The 66-residue stretch at 142-207 (DSTLISVLSN…ELIDLAKRNN (66 aa)) folds into the HTH luxR-type domain. The H-T-H motif DNA-binding region spans 166–185 (NKDIADSMFLSNKTVSTYKT).

As to quaternary structure, homodimer. Phosphorylated by BvgS.

Functionally, member of the two-component regulatory system BvgS/BvgA. Activates the transcription of virulence genes. The polypeptide is Virulence factors putative positive transcription regulator BvgA (bvgA) (Bordetella bronchiseptica (strain ATCC BAA-588 / NCTC 13252 / RB50) (Alcaligenes bronchisepticus)).